The following is a 174-amino-acid chain: Variant surface antigen B (174 aa).

The N-terminal stretch at 1–29 is a signal peptide; the sequence is MKKSIFSKKLLVSFGSLVALASIPLIAIS. Cys-30 is lipidated: N-palmitoyl cysteine. Cys-30 carries S-diacylglycerol cysteine lipidation. Residues 32–174 are disordered; it reads QTNTDKSQQP…SQDSGNGSTK (143 aa). Positions 38 to 49 are enriched in low complexity; sequence SQQPGSGSSTSG. Gly residues predominate over residues 50–75; the sequence is GQSGTGLGSGTTTGGQSGTTTGGRSG. The span at 76 to 97 shows a compositional bias: low complexity; that stretch reads SGSSSSTTGGQTGTGSDSQDSG. A run of 7 repeats spans residues 88–99, 100–111, 112–123, 124–135, 136–147, 148–159, and 160–171. Residues 88 to 171 are 7 X 12 AA tandem repeats; the sequence is GTGSDSQDSG…GSDSQDSGNG (84 aa). Over residues 102-174 the composition is skewed to polar residues; it reads GSDSQDSGAK…SQDSGNGSTK (73 aa).

It localises to the cell membrane. Responsible for the antigenic diversity for host adaptation. The polypeptide is Variant surface antigen B (vlpB) (Mesomycoplasma hyorhinis (Mycoplasma hyorhinis)).